A 156-amino-acid chain; its full sequence is MISVLFVCLGNICRSPMAEAIFRDLAAKKGLEGKIKADSAGIGGWHIGNPPHEGTQEILRREGISFDGMLARQVSEQDLDDFDYIIAMDAENIGSLRSMAGFKNTSHIKRLLDYVEDSDLADVPDPYYTGNFEEVCQLIKTGCEQLLASIQKEKQL.

Residue Cys-8 is the Nucleophile of the active site. Arg-14 is an active-site residue. Asp-125 acts as the Proton donor in catalysis.

Belongs to the low molecular weight phosphotyrosine protein phosphatase family.

The catalysed reaction is O-phospho-L-tyrosyl-[protein] + H2O = L-tyrosyl-[protein] + phosphate. Its activity is regulated as follows. Efficiently inhibited by Cu(2+) ion, Zn(2+) ion and N-ethylmaleimide, while the addition of Mg(2+), Ca(2+) or Fe(3+) ions has minimal effect. Inhibited in a competitive manner by vanadate. Functionally, dephosphorylates the phosphotyrosine-containing proteins. Involved in ethanol stress resistance. In Bacillus subtilis (strain 168), this protein is Low molecular weight protein-tyrosine-phosphatase YfkJ (yfkJ).